A 269-amino-acid chain; its full sequence is uncharacterized protein (269 aa).

A compositionally biased stretch (basic and acidic residues) spans 181–191 (QKKELSPHEIA). The interval 181–203 (QKKELSPHEIAESPSSHSTSPMG) is disordered. Polar residues predominate over residues 193–202 (SPSSHSTSPM). The residue at position 200 (serine 200) is a Phosphoserine.

This is an uncharacterized protein from Schizosaccharomyces pombe (strain 972 / ATCC 24843) (Fission yeast).